A 161-amino-acid polypeptide reads, in one-letter code: Sec-independent protein translocase protein TatB (161 aa).

The helical transmembrane segment at 2–22 (FNDIGALELVTLVVLAVLVFG) threads the bilayer. A disordered region spans residues 102–161 (DAVHGRDAESSSSGSSSGSSSAASGNGRVDMSKKPEKPEKPGKTDKPAADDRPPFDMDAT). Positions 111-126 (SSSSGSSSGSSSAASG) are enriched in low complexity. The span at 131 to 161 (DMSKKPEKPEKPGKTDKPAADDRPPFDMDAT) shows a compositional bias: basic and acidic residues.

The protein belongs to the TatB family. As to quaternary structure, the Tat system comprises two distinct complexes: a TatABC complex, containing multiple copies of TatA, TatB and TatC subunits, and a separate TatA complex, containing only TatA subunits. Substrates initially bind to the TatABC complex, which probably triggers association of the separate TatA complex to form the active translocon.

The protein localises to the cell membrane. Part of the twin-arginine translocation (Tat) system that transports large folded proteins containing a characteristic twin-arginine motif in their signal peptide across membranes. Together with TatC, TatB is part of a receptor directly interacting with Tat signal peptides. TatB may form an oligomeric binding site that transiently accommodates folded Tat precursor proteins before their translocation. The sequence is that of Sec-independent protein translocase protein TatB from Streptomyces coelicolor (strain ATCC BAA-471 / A3(2) / M145).